The following is a 152-amino-acid chain: 3-dehydroquinate dehydratase (152 aa).

The active-site Proton acceptor is Tyr-23. Positions 74, 80, and 87 each coordinate substrate. The active-site Proton donor is His-100. Substrate is bound by residues 101 to 102 (LS) and Arg-111.

The protein belongs to the type-II 3-dehydroquinase family. In terms of assembly, homododecamer.

The catalysed reaction is 3-dehydroquinate = 3-dehydroshikimate + H2O. Its pathway is metabolic intermediate biosynthesis; chorismate biosynthesis; chorismate from D-erythrose 4-phosphate and phosphoenolpyruvate: step 3/7. In terms of biological role, catalyzes a trans-dehydration via an enolate intermediate. The polypeptide is 3-dehydroquinate dehydratase (Clostridium botulinum (strain Langeland / NCTC 10281 / Type F)).